The primary structure comprises 383 residues: Gamma-butyrobetaine dioxygenase (383 aa).

Zn(2+) contacts are provided by Cys-46, Cys-48, Cys-51, and His-91. Residues His-209, Asp-211, and His-350 each contribute to the Fe cation site.

This sequence belongs to the gamma-BBH/TMLD family. As to quaternary structure, homodimer. It depends on Fe(2+) as a cofactor. L-ascorbate serves as cofactor.

It localises to the cytoplasm. The catalysed reaction is 4-(trimethylamino)butanoate + 2-oxoglutarate + O2 = carnitine + succinate + CO2. Its pathway is amine and polyamine biosynthesis; carnitine biosynthesis. Catalyzes the formation of L-carnitine from gamma-butyrobetaine. This is Gamma-butyrobetaine dioxygenase from Pseudomonas sp. (strain AK-1).